A 427-amino-acid chain; its full sequence is Phosphoribosylamine--glycine ligase (427 aa).

One can recognise an ATP-grasp domain in the interval 109-313; the sequence is RNLMAEYKIE…LAEVVTGITE (205 aa). 136–191 lines the ATP pocket; sequence VRDHDGDLAVKPIGLTGGKGVRIMGEQVDRAGAIEYIREINGGVVLEERLTGEEFT. Residues Q271, E283, and N285 each contribute to the Mg(2+) site. Mn(2+) is bound by residues Q271, E283, and N285.

It belongs to the GARS family. Mg(2+) serves as cofactor. Mn(2+) is required as a cofactor.

It carries out the reaction 5-phospho-beta-D-ribosylamine + glycine + ATP = N(1)-(5-phospho-beta-D-ribosyl)glycinamide + ADP + phosphate + H(+). It participates in purine metabolism; IMP biosynthesis via de novo pathway; N(1)-(5-phospho-D-ribosyl)glycinamide from 5-phospho-alpha-D-ribose 1-diphosphate: step 2/2. The protein is Phosphoribosylamine--glycine ligase of Methanoregula boonei (strain DSM 21154 / JCM 14090 / 6A8).